Consider the following 97-residue polypeptide: Antitoxin YafN (97 aa).

Belongs to the phD/YefM antitoxin family. In terms of assembly, probably forms a complex with the mRNA interferase YafO which inhibits the mRNA interferase activity.

In terms of biological role, antitoxin component of a type II toxin-antitoxin (TA) system. Functions as an mRNA interferase antitoxin; overexpression prevents YafO-mediated cessation of cell growth and inhibition of cell proliferation. The polypeptide is Antitoxin YafN (yafN) (Escherichia coli (strain K12)).